A 297-amino-acid polypeptide reads, in one-letter code: Bifunctional protein FolD (297 aa).

Residues 167–169, Ser-192, and Ile-233 each bind NADP(+); that span reads GRS.

The protein belongs to the tetrahydrofolate dehydrogenase/cyclohydrolase family. As to quaternary structure, homodimer.

The enzyme catalyses (6R)-5,10-methylene-5,6,7,8-tetrahydrofolate + NADP(+) = (6R)-5,10-methenyltetrahydrofolate + NADPH. The catalysed reaction is (6R)-5,10-methenyltetrahydrofolate + H2O = (6R)-10-formyltetrahydrofolate + H(+). It participates in one-carbon metabolism; tetrahydrofolate interconversion. Functionally, catalyzes the oxidation of 5,10-methylenetetrahydrofolate to 5,10-methenyltetrahydrofolate and then the hydrolysis of 5,10-methenyltetrahydrofolate to 10-formyltetrahydrofolate. This is Bifunctional protein FolD from Caulobacter vibrioides (strain ATCC 19089 / CIP 103742 / CB 15) (Caulobacter crescentus).